We begin with the raw amino-acid sequence, 437 residues long: Transcription factor E2F1 (437 aa).

Disordered regions lie at residues 42–87 and 101–128; these read ASAP…GRPP and LAES…KSRY. Residues 67 to 108 are cyclin A:CDK2 binding; it reads ATPQAPRPTPSAPRPALGRPPVKRRLDLETDHQYLAESSGPA. The tract at residues 89-191 is interaction with BIRC2/c-IAP1; that stretch reads KRRLDLETDH…KKSKNHIQWL (103 aa). A DNA-binding region spans residues 110-194; the sequence is GRGRHPGKGV…KNHIQWLGSH (85 aa). N6-acetyllysine is present on residues Lys-117, Lys-120, and Lys-125. Residues 153 to 174 form a leucine-zipper region; it reads LNWAAEVLKVQKRRIYDITNVL. The DEF box motif lies at 158 to 194; sequence EVLKVQKRRIYDITNVLEGIQLIAKKSKNHIQWLGSH. Residue Lys-185 is modified to N6-methyllysine; by SETD7. Residues 192–382 are required for interaction with TRIM28; that stretch reads GSHTTVGVGG…RLSPLVAADS (191 aa). Residues 195 to 284 are dimerization; the sequence is TTVGVGGRLE…AVDSSENFQI (90 aa). Positions 300–349 are disordered; the sequence is EETVGGISPGKTPSQEVTSEEENRATDSATIVSPPPSSPPSSLTTDPSQS. Positions 339–349 are enriched in low complexity; sequence PSSLTTDPSQS. Position 364 is a phosphoserine; by CHEK2 (Ser-364). A transactivation region spans residues 368–437; that stretch reads PVDEDRLSPL…DFGDLTPLDF (70 aa). Phosphoserine is present on Ser-375. Ser-403 carries the phosphoserine; by GSK3-beta modification. The tract at residues 409–426 is RB1 binding; sequence LDYHFGLEEGEGIRDLFD. A Phosphothreonine; by GSK3-beta modification is found at Thr-433.

This sequence belongs to the E2F/DP family. In terms of assembly, component of the DRTF1/E2F transcription factor complex. Forms heterodimers with DP family members. The E2F1 complex binds specifically hypophosphorylated RB1, the interaction represses E2F1-driven transcription. During the cell cycle, RB1 becomes phosphorylated in mid-to-late G1 phase, detaches from the DRTF1/E2F complex, rendering E2F transcriptionally active. Viral oncoproteins, notably E1A, T-antigen and HPV E7, are capable of sequestering RB1, thus releasing the active complex. Interacts with TRRAP, which probably mediates its interaction with histone acetyltransferase complexes, leading to transcription activation. Binds TOPBP1 and EAPP. Interacts with ARID3A. Interacts with TRIM28; the interaction inhibits E2F1 acetylation through recruiting HDAC1 and represses its transcriptional activity. Interaction with KAT2B; the interaction acetylates E2F1 enhancing its DNA-binding and transcriptional activity. Interacts with BIRC2/c-IAP1 (via BIR domains). The complex TFDP1:E2F1 interacts with CEBPA; the interaction prevents CEBPA binding to target genes promoters and represses its transcriptional activity. Interacts with RRP1B. Interacts with HCFC1. Interacts with KMT2E; the interaction is probably indirect and is mediated via HCFC1. Interacts with DCAF5 and L3MBTL3; the interaction requires methylation at Lys-185 and is necessary to target E2F1 for ubiquitination by the CRL4-DCAF5 E3 ubiquitin ligase complex. (Microbial infection) Interacts with human cytomegalovirus/HHV-5 protein UL123. Post-translationally, phosphorylated by CDK2 and cyclin A-CDK2 in the S-phase. Phosphorylation at Ser-364 by CHEK2 stabilizes E2F1 upon DNA damage and regulates its effect on transcription and apoptosis. Phosphorylation at Ser-403 by GSK3B promotes interaction with USP11, leading to its deubiquitination and stabilization. Ubiquitinated via 'Lys-63'-linked ubiquitin, leading to its degradation. Deubiquitinated by USP11 following phosphorylation by GSK3B, promoting its stability. In terms of processing, acetylation stimulates DNA-binding. Enhanced under stress conditions such as DNA damage and inhibited by retinoblastoma protein RB1. Regulated by KAP1/TRIM28 which recruits HDAC1 to E2F1 resulting in deacetylation. Acetylated by P/CAF/KAT2B. Post-translationally, methylation at Lys-185 by SETD7 promotes E2F1 ubiquitin-dependent proteasomal degradation.

The protein localises to the nucleus. With respect to regulation, BIRC2/c-IAP1 stimulates its transcriptional activity. Its function is as follows. Transcription activator that binds DNA cooperatively with DP proteins through the E2 recognition site, 5'-TTTC[CG]CGC-3' found in the promoter region of a number of genes whose products are involved in cell cycle regulation or in DNA replication. The DRTF1/E2F complex functions in the control of cell-cycle progression from G1 to S phase. E2F1 binds preferentially RB1 in a cell-cycle dependent manner. It can mediate both cell proliferation and TP53/p53-dependent apoptosis. Blocks adipocyte differentiation by binding to specific promoters repressing CEBPA binding to its target gene promoters. Directly activates transcription of PEG10. Positively regulates transcription of RRP1B. The sequence is that of Transcription factor E2F1 from Homo sapiens (Human).